The following is a 228-amino-acid chain: Lipoprotein-releasing system ATP-binding protein LolD (228 aa).

In terms of domain architecture, ABC transporter spans 6–227 (LELLGIDRTY…LKDGKLIDYV (222 aa)). Position 42–49 (42–49 (GPSGSGKS)) interacts with ATP.

It belongs to the ABC transporter superfamily. Lipoprotein translocase (TC 3.A.1.125) family. As to quaternary structure, the complex is composed of two ATP-binding proteins (LolD) and two transmembrane proteins (LolC and LolE).

The protein resides in the cell inner membrane. Part of the ABC transporter complex LolCDE involved in the translocation of mature outer membrane-directed lipoproteins, from the inner membrane to the periplasmic chaperone, LolA. Responsible for the formation of the LolA-lipoprotein complex in an ATP-dependent manner. The protein is Lipoprotein-releasing system ATP-binding protein LolD of Hyphomonas neptunium (strain ATCC 15444).